A 610-amino-acid polypeptide reads, in one-letter code: GATOR complex protein NPRL3 (610 aa).

S437 bears the Phosphoserine mark. The tract at residues 474-501 (REASEDHSSLASDNIAVQPSSSHKSNFS) is disordered. Residues 482 to 501 (SLASDNIAVQPSSSHKSNFS) are compositionally biased toward polar residues.

Belongs to the NPR3 family. Component of the GATOR complex consisting of mio, Nup44A/Seh1, Im11, Nplr3, Nplr2, Wdr24, Wdr59 and Sec13. Within the GATOR complex, probable component of the GATOR1 subcomplex which is likely composed of Iml1, Nplr2 and Nplr3. Interacts with Nprl2.

The protein localises to the cytoplasm. It is found in the lysosome. Functionally, an essential component of the GATOR subcomplex GATOR1 which functions as an inhibitor of the amino acid-sensing branch of the TORC1 signaling pathway. The two GATOR subcomplexes, GATOR1 and GATOR2, regulate the TORC1 pathway in order to mediate metabolic homeostasis, female gametogenesis and the response to amino acid limitation and complete starvation. The function of GATOR1 in negatively regulating the TORC1 pathway is essential for maintaining baseline levels of TORC1 activity under nutrient rich conditions, and for promoting survival during amino acid or complete starvation by inhibiting TORC1-dependent cell growth and promoting catabolic metabolism and autophagy. In addition, this inhibition of TORC1 is necessary to maintain female fertility under normal conditions and during periods of nutrient stress. GATOR1 and GATOR2 act at different stages of oogenesis to regulate TORC1 in order to control meiotic entry and promote oocyte growth and development. After exactly four mitotic cyst divisions, the GATOR1 complex members (Iml1, Nprl2 and Nprl3) down-regulate TORC1 to slow cellular metabolism and promote the mitotic/meiotic transition. At later stages of oogenesis, the mio and Nup44A components of the GATOR2 complex inhibit GATOR1 and thus activate TORC1 to promote meiotic progression, and drive oocyte growth and development. In Drosophila melanogaster (Fruit fly), this protein is GATOR complex protein NPRL3.